The sequence spans 359 residues: Phospho-N-acetylmuramoyl-pentapeptide-transferase (359 aa).

10 consecutive transmembrane segments (helical) span residues 3-23 (QIMI…PALI), 55-75 (VAIL…GLAF), 80-100 (ITAS…VGFL), 117-137 (TAKT…VLQF), 156-176 (IATV…VVSA), 187-207 (LDGL…LITF), 231-251 (LALI…WNAA), 255-275 (IFMG…LSVT), 280-300 (ILAV…VLQI), and 334-354 (FWLL…GEWL).

This sequence belongs to the glycosyltransferase 4 family. MraY subfamily. Requires Mg(2+) as cofactor.

It localises to the cell membrane. The catalysed reaction is UDP-N-acetyl-alpha-D-muramoyl-L-alanyl-gamma-D-glutamyl-meso-2,6-diaminopimeloyl-D-alanyl-D-alanine + di-trans,octa-cis-undecaprenyl phosphate = di-trans,octa-cis-undecaprenyl diphospho-N-acetyl-alpha-D-muramoyl-L-alanyl-D-glutamyl-meso-2,6-diaminopimeloyl-D-alanyl-D-alanine + UMP. The protein operates within cell wall biogenesis; peptidoglycan biosynthesis. Catalyzes the initial step of the lipid cycle reactions in the biosynthesis of the cell wall peptidoglycan: transfers peptidoglycan precursor phospho-MurNAc-pentapeptide from UDP-MurNAc-pentapeptide onto the lipid carrier undecaprenyl phosphate, yielding undecaprenyl-pyrophosphoryl-MurNAc-pentapeptide, known as lipid I. This chain is Phospho-N-acetylmuramoyl-pentapeptide-transferase, found in Mycobacterium ulcerans (strain Agy99).